The primary structure comprises 441 residues: Apolipoprotein N-acyltransferase (441 aa).

7 helical membrane passes run 23 to 43, 45 to 65, 75 to 95, 97 to 117, 133 to 153, 156 to 176, and 178 to 198; these read IIFKIIKVFFIAILLSNSIYL, FFENIFTQTISPFLAIWGLVL, YFWIGFFVGILWFWWIGLSSI, FNLNYLVPIIPIIIGFIYGLL, GIFCISFIHPLGFDWFNWGIF, YGFFDPSYRGIICIFLIAYFI, and EGYISRYYKIAIVLILFFSGF. Positions 215 to 441 constitute a CN hydrolase domain; that stretch reads INTNISQDQK…LSKEIFNDKK (227 aa). Glu256 acts as the Proton acceptor in catalysis. Residue Lys310 is part of the active site. Residue Cys359 is the Nucleophile of the active site.

It belongs to the CN hydrolase family. Apolipoprotein N-acyltransferase subfamily.

It is found in the cell inner membrane. It catalyses the reaction N-terminal S-1,2-diacyl-sn-glyceryl-L-cysteinyl-[lipoprotein] + a glycerophospholipid = N-acyl-S-1,2-diacyl-sn-glyceryl-L-cysteinyl-[lipoprotein] + a 2-acyl-sn-glycero-3-phospholipid + H(+). The protein operates within protein modification; lipoprotein biosynthesis (N-acyl transfer). In terms of biological role, catalyzes the phospholipid dependent N-acylation of the N-terminal cysteine of apolipoprotein, the last step in lipoprotein maturation. In Campylobacter jejuni subsp. jejuni serotype O:2 (strain ATCC 700819 / NCTC 11168), this protein is Apolipoprotein N-acyltransferase.